Consider the following 170-residue polypeptide: Adenine phosphoribosyltransferase (170 aa).

This sequence belongs to the purine/pyrimidine phosphoribosyltransferase family. In terms of assembly, homodimer.

It localises to the cytoplasm. The enzyme catalyses AMP + diphosphate = 5-phospho-alpha-D-ribose 1-diphosphate + adenine. The protein operates within purine metabolism; AMP biosynthesis via salvage pathway; AMP from adenine: step 1/1. Its function is as follows. Catalyzes a salvage reaction resulting in the formation of AMP, that is energically less costly than de novo synthesis. The sequence is that of Adenine phosphoribosyltransferase from Oceanobacillus iheyensis (strain DSM 14371 / CIP 107618 / JCM 11309 / KCTC 3954 / HTE831).